A 436-amino-acid polypeptide reads, in one-letter code: UPF0597 protein YhaM (436 aa).

It belongs to the UPF0597 family.

In Escherichia coli (strain K12 / MC4100 / BW2952), this protein is UPF0597 protein YhaM.